The sequence spans 342 residues: Biotin synthase (342 aa).

In terms of domain architecture, Radical SAM core spans 36 to 260 (NRIQISTLLS…MMPKSYIRLS (225 aa)). Cysteine 51, cysteine 55, and cysteine 58 together coordinate [4Fe-4S] cluster. Cysteine 95, cysteine 126, cysteine 186, and arginine 258 together coordinate [2Fe-2S] cluster.

This sequence belongs to the radical SAM superfamily. Biotin synthase family. In terms of assembly, homodimer. Requires [4Fe-4S] cluster as cofactor. [2Fe-2S] cluster is required as a cofactor.

It carries out the reaction (4R,5S)-dethiobiotin + (sulfur carrier)-SH + 2 reduced [2Fe-2S]-[ferredoxin] + 2 S-adenosyl-L-methionine = (sulfur carrier)-H + biotin + 2 5'-deoxyadenosine + 2 L-methionine + 2 oxidized [2Fe-2S]-[ferredoxin]. Its pathway is cofactor biosynthesis; biotin biosynthesis; biotin from 7,8-diaminononanoate: step 2/2. Its function is as follows. Catalyzes the conversion of dethiobiotin (DTB) to biotin by the insertion of a sulfur atom into dethiobiotin via a radical-based mechanism. The chain is Biotin synthase from Buchnera aphidicola subsp. Schizaphis graminum (strain Sg).